Consider the following 318-residue polypeptide: DNA primase small subunit PriS (318 aa).

Active-site residues include D95, D97, and D224.

The protein belongs to the eukaryotic-type primase small subunit family. As to quaternary structure, heterodimer of a small subunit (PriS) and a large subunit (PriL). The cofactor is Mg(2+). Mn(2+) serves as cofactor.

Catalytic subunit of DNA primase, an RNA polymerase that catalyzes the synthesis of short RNA molecules used as primers for DNA polymerase during DNA replication. The small subunit contains the primase catalytic core and has DNA synthesis activity on its own. Binding to the large subunit stabilizes and modulates the activity, increasing the rate of DNA synthesis while decreasing the length of the DNA fragments, and conferring RNA synthesis capability. The DNA polymerase activity may enable DNA primase to also catalyze primer extension after primer synthesis. May also play a role in DNA repair. The protein is DNA primase small subunit PriS of Sulfurisphaera tokodaii (strain DSM 16993 / JCM 10545 / NBRC 100140 / 7) (Sulfolobus tokodaii).